The chain runs to 186 residues: Zinc finger AN1 domain-containing stress-associated protein 12 (186 aa).

AN1-type zinc fingers lie at residues proline 10–arginine 58 and lysine 97–alanine 147. Cysteine 16, cysteine 21, cysteine 31, cysteine 34, cysteine 39, histidine 42, histidine 48, cysteine 50, cysteine 103, cysteine 108, cysteine 120, cysteine 123, cysteine 128, histidine 131, histidine 137, and cysteine 139 together coordinate Zn(2+). Positions lysine 167–phenylalanine 186 are disordered. Residues glycine 172–phenylalanine 186 show a composition bias toward low complexity.

May be involved in environmental stress response. The chain is Zinc finger AN1 domain-containing stress-associated protein 12 (SAP12) from Arabidopsis thaliana (Mouse-ear cress).